A 191-amino-acid chain; its full sequence is Leucyl/phenylalanyl-tRNA--protein transferase (191 aa).

Belongs to the L/F-transferase family.

The protein localises to the cytoplasm. It carries out the reaction N-terminal L-lysyl-[protein] + L-leucyl-tRNA(Leu) = N-terminal L-leucyl-L-lysyl-[protein] + tRNA(Leu) + H(+). The enzyme catalyses N-terminal L-arginyl-[protein] + L-leucyl-tRNA(Leu) = N-terminal L-leucyl-L-arginyl-[protein] + tRNA(Leu) + H(+). It catalyses the reaction L-phenylalanyl-tRNA(Phe) + an N-terminal L-alpha-aminoacyl-[protein] = an N-terminal L-phenylalanyl-L-alpha-aminoacyl-[protein] + tRNA(Phe). Its function is as follows. Functions in the N-end rule pathway of protein degradation where it conjugates Leu, Phe and, less efficiently, Met from aminoacyl-tRNAs to the N-termini of proteins containing an N-terminal arginine or lysine. This chain is Leucyl/phenylalanyl-tRNA--protein transferase, found in Herpetosiphon aurantiacus (strain ATCC 23779 / DSM 785 / 114-95).